The sequence spans 112 residues: Putative pterin-4-alpha-carbinolamine dehydratase (112 aa).

It belongs to the pterin-4-alpha-carbinolamine dehydratase family.

It catalyses the reaction (4aS,6R)-4a-hydroxy-L-erythro-5,6,7,8-tetrahydrobiopterin = (6R)-L-erythro-6,7-dihydrobiopterin + H2O. The protein is Putative pterin-4-alpha-carbinolamine dehydratase of Shewanella loihica (strain ATCC BAA-1088 / PV-4).